We begin with the raw amino-acid sequence, 596 residues long: Elongation factor 4 (596 aa).

A tr-type G domain is found at 2–184 (KHIRNFSIIA…MIVKDVPPPV (183 aa)). GTP contacts are provided by residues 14-19 (DHGKST) and 131-134 (NKID).

It belongs to the TRAFAC class translation factor GTPase superfamily. Classic translation factor GTPase family. LepA subfamily.

The protein resides in the cell inner membrane. The enzyme catalyses GTP + H2O = GDP + phosphate + H(+). Required for accurate and efficient protein synthesis under certain stress conditions. May act as a fidelity factor of the translation reaction, by catalyzing a one-codon backward translocation of tRNAs on improperly translocated ribosomes. Back-translocation proceeds from a post-translocation (POST) complex to a pre-translocation (PRE) complex, thus giving elongation factor G a second chance to translocate the tRNAs correctly. Binds to ribosomes in a GTP-dependent manner. The chain is Elongation factor 4 from Pseudoalteromonas translucida (strain TAC 125).